Here is a 279-residue protein sequence, read N- to C-terminus: Putative pyruvate, phosphate dikinase regulatory protein (279 aa).

153–160 is an ADP binding site; it reads GVSRTSKT.

Belongs to the pyruvate, phosphate/water dikinase regulatory protein family. PDRP subfamily.

It carries out the reaction N(tele)-phospho-L-histidyl/L-threonyl-[pyruvate, phosphate dikinase] + ADP = N(tele)-phospho-L-histidyl/O-phospho-L-threonyl-[pyruvate, phosphate dikinase] + AMP + H(+). It catalyses the reaction N(tele)-phospho-L-histidyl/O-phospho-L-threonyl-[pyruvate, phosphate dikinase] + phosphate + H(+) = N(tele)-phospho-L-histidyl/L-threonyl-[pyruvate, phosphate dikinase] + diphosphate. In terms of biological role, bifunctional serine/threonine kinase and phosphorylase involved in the regulation of the pyruvate, phosphate dikinase (PPDK) by catalyzing its phosphorylation/dephosphorylation. This chain is Putative pyruvate, phosphate dikinase regulatory protein, found in Rhodopseudomonas palustris (strain BisA53).